Reading from the N-terminus, the 2434-residue chain is ATP-binding cassette sub-family A member 2 (2434 aa).

Residue N14 is glycosylated (N-linked (GlcNAc...) asparagine). Transmembrane regions (helical) follow at residues 22 to 42 (PWVLAFEIFIPLVLFFILLGL) and 54 to 74 (AFYTAAPLTSAGILPVMQSLC). N-linked (GlcNAc...) asparagine glycosylation is found at N89, N168, and N173. Q271 is subject to N5-methylglutamine. N-linked (GlcNAc...) asparagine glycans are attached at residues N305, N368, N379, N420, N432, N476, N484, N494, N530, N549, N590, N600, and N628. Over residues 354-369 (RAPAPQAGSPSGPANS) the composition is skewed to low complexity. The disordered stretch occupies residues 354-396 (RAPAPQAGSPSGPANSTGVGANTGPNTTVEEGTQSPVTPASPD). A compositionally biased stretch (polar residues) spans 370–396 (TGVGANTGPNTTVEEGTQSPVTPASPD). Transmembrane regions (helical) follow at residues 699–719 (FLFVIEHMMPLCMVISWVYSV), 750–770 (VAWFITGFVQLSISVTALTAI), 782–802 (VLIIWLFLAVYAVATIMFCFL), 813–833 (ASACGGIIYFLSYVPYMYVAI), 857–877 (AFGLGSKYFALYEVAGVGIQW), and 893–913 (LLAVTMLMVDTVVYGVLTWYI). In terms of domain architecture, ABC transporter 1 spans 990 to 1221 (VCVDKLTKVY…YGDGYRLTLV (232 aa)). 1024–1031 (GHNGAGKT) is an ATP binding site. The interval 1225 to 1246 (AEPGTSQEPGMASSPSGRPQLS) is disordered. A compositionally biased stretch (polar residues) spans 1228–1246 (GTSQEPGMASSPSGRPQLS). Position 1238 is a phosphoserine (S1238). A glycan (N-linked (GlcNAc...) asparagine) is linked at N1247. Phosphoserine is present on residues S1327 and S1331. Residues 1461 to 1481 (ILLPAFFVCVAMTVALSVPEI) traverse the membrane as a helical segment. N-linked (GlcNAc...) asparagine glycans are attached at residues N1496, N1549, and N1557. The interval 1587 to 1606 (NFVPPPPSPAPSDSPLSPDE) is disordered. Positions 1589 to 1598 (VPPPPSPAPS) are enriched in pro residues. N-linked (GlcNAc...) asparagine glycans are attached at residues N1613, N1678, and N1776. 5 helical membrane-spanning segments follow: residues 1793 to 1813 (VVIAIFIIVAMSFVPASFVVF), 1842 to 1862 (VWDMLNYLVPATCCIIILFVF), 1873 to 1893 (FPAVLSLFLLYGWSITPIMYP), 1906 to 1926 (VFLIVINLFIGITATVATFLL), and 1992 to 2012 (GLVAMTVEGFVGFFLTIMCQY). The region spanning 2051–2286 (VKIENLTKVY…FGDGYMITVR (236 aa)) is the ABC transporter 2 domain. N-linked (GlcNAc...) asparagine glycosylation occurs at N2055. Residue 2088-2095 (GVNGAGKT) coordinates ATP. A Phosphothreonine modification is found at T2411.

The protein belongs to the ABC transporter superfamily. ABCA family. Post-translationally, N-glycosylated. Methylated at Gln-271 by N6AMT1. In terms of tissue distribution, expressed at high levels in brain, at moderate levels in heart, kidney and lung, and at low levels in skeletal muscle, stomach, spleen, colon and pancreas. Not detected in the liver or small intestine. In brain, highly expressed in white matter and detected in oligodendrocytes. Expressed in cerebellum as well as the anterior commissure. Expressed mainly in the white matter but is also scattered in gray matter throughout the whole brain. Expressed in myelinating cells of both ventral and dorsal restricted regions in newborn spinal cord. Expressed in non-myelin-forming as well as in myelin-forming Schwann cells in the sciatic nerve.

The protein localises to the endosome membrane. It is found in the lysosome membrane. Its function is as follows. Probable transporter, its natural substrate has not been found yet. May have a role in macrophage lipid metabolism and neural development. May play a role in myelination, perhaps as a transporter for certain kinds of myelin chemical components. May play an important role in gamma-secretase processing of APP and thus in amyloid-beta peptide generation. Regulates esterification of plasma membrane cholesterol by modulation of sphingolipid metabolism. Functionally, probable lipid transporter that modulates cholesterol sequestration in the late endosome/lysosome by regulating the intracellular sphingolipid metabolism, in turn participates in cholesterol homeostasis. May alter the transbilayer distribution of ceramide in the intraluminal membrane lipid bilayer, favoring its retention in the outer leaflet that results in increased acid ceramidase activity in the late endosome/lysosome, facilitating ceramide deacylation to sphingosine leading to the sequestration of free cholesterol in lysosomes. In addition regulates amyloid-beta production either by activating a signaling pathway that regulates amyloid precursor protein transcription through the modulation of sphingolipid metabolism or through its role in gamma-secretase processing of APP. May play a role in myelin formation. This is ATP-binding cassette sub-family A member 2 from Rattus norvegicus (Rat).